The primary structure comprises 92 residues: RNA-binding protein Hfq (92 aa).

Residues 9 to 68 (DPFLNALRRERVPVSIYLVNGIKLQGQVESFDQFVILLKNTVSQMVYKHAISTVVPARPF) enclose the Sm domain. Residues 68–92 (FNVSSHHNTPNQAAGYNASHDDSAE) are disordered. The segment covering 69 to 81 (NVSSHHNTPNQAA) has biased composition (polar residues).

The protein belongs to the Hfq family. Homohexamer.

Functionally, RNA chaperone that binds small regulatory RNA (sRNAs) and mRNAs to facilitate mRNA translational regulation in response to envelope stress, environmental stress and changes in metabolite concentrations. Also binds with high specificity to tRNAs. The polypeptide is RNA-binding protein Hfq (Shewanella loihica (strain ATCC BAA-1088 / PV-4)).